The chain runs to 332 residues: rRNA biogenesis protein rrp-36 (332 aa).

Disordered regions lie at residues 1–91 (MPAV…ASQL), 104–196 (GALK…SGKS), 243–262 (SMES…ELLS), and 312–332 (KKIA…AEDR). 3 stretches are compositionally biased toward acidic residues: residues 27–45 (EPDS…EEEG), 53–77 (DTEE…DSDA), and 117–127 (EDGSDDDEEKE). 2 stretches are compositionally biased toward basic and acidic residues: residues 128-142 (EPNW…MKAK) and 165-183 (RRRD…RDPR). Positions 212 to 274 (DYQEDEMKQL…KKKEKELIKQ (63 aa)) form a coiled coil. Residues 315–332 (AGKEKKALPLARRTAEDR) show a composition bias toward basic and acidic residues.

The protein belongs to the RRP36 family. In terms of assembly, associates with 90S and pre-40S pre-ribosomal particles.

It is found in the nucleus. It localises to the nucleolus. In terms of biological role, component of the 90S pre-ribosome involved in the maturation of rRNAs. Required for early cleavages of the pre-RNAs in the 40S ribosomal subunit maturation pathway. This Neurospora crassa (strain ATCC 24698 / 74-OR23-1A / CBS 708.71 / DSM 1257 / FGSC 987) protein is rRNA biogenesis protein rrp-36 (rrp-36).